We begin with the raw amino-acid sequence, 905 residues long: Alanine--tRNA ligase (905 aa).

Zn(2+) contacts are provided by His595, His599, Cys696, and His700.

Belongs to the class-II aminoacyl-tRNA synthetase family. The cofactor is Zn(2+).

It localises to the cytoplasm. The enzyme catalyses tRNA(Ala) + L-alanine + ATP = L-alanyl-tRNA(Ala) + AMP + diphosphate. Functionally, catalyzes the attachment of alanine to tRNA(Ala) in a two-step reaction: alanine is first activated by ATP to form Ala-AMP and then transferred to the acceptor end of tRNA(Ala). Also edits incorrectly charged Ser-tRNA(Ala) and Gly-tRNA(Ala) via its editing domain. In Anaeromyxobacter dehalogenans (strain 2CP-C), this protein is Alanine--tRNA ligase.